Consider the following 159-residue polypeptide: NADH-quinone oxidoreductase subunit B 2 (159 aa).

[4Fe-4S] cluster contacts are provided by Cys37, Cys38, Cys102, and Cys132.

Belongs to the complex I 20 kDa subunit family. In terms of assembly, NDH-1 is composed of 14 different subunits. Subunits NuoB, C, D, E, F, and G constitute the peripheral sector of the complex. It depends on [4Fe-4S] cluster as a cofactor.

The protein localises to the cell inner membrane. It carries out the reaction a quinone + NADH + 5 H(+)(in) = a quinol + NAD(+) + 4 H(+)(out). In terms of biological role, NDH-1 shuttles electrons from NADH, via FMN and iron-sulfur (Fe-S) centers, to quinones in the respiratory chain. Couples the redox reaction to proton translocation (for every two electrons transferred, four hydrogen ions are translocated across the cytoplasmic membrane), and thus conserves the redox energy in a proton gradient. This chain is NADH-quinone oxidoreductase subunit B 2, found in Azoarcus sp. (strain BH72).